Here is a 598-residue protein sequence, read N- to C-terminus: Autophagy-related protein 22-1 (598 aa).

The disordered stretch occupies residues 1–20 (MEDGGAGLRAPRYPAEDTSP). A helical transmembrane segment spans residues 28–48 (GFFCYGLAAEVFAVCAVGSFL). N-linked (GlcNAc...) asparagine glycans are attached at residues asparagine 74 and asparagine 80. 3 helical membrane passes run 111-131 (SFAM…LVSV), 159-179 (FLLV…ICVV), and 182-202 (GCSF…HPVV). The disordered stretch occupies residues 207–238 (DHPTASSSIPLQPISPQRSSRKSEESLHQVNR). Positions 212-224 (SSSIPLQPISPQR) are enriched in low complexity. The segment covering 227-238 (RKSEESLHQVNR) has biased composition (basic and acidic residues). Residues 263 to 283 (VGIGYMAAVSVQVICILILYI) form a helical membrane-spanning segment. N-linked (GlcNAc...) asparagine glycosylation is present at asparagine 285. 7 helical membrane passes run 297 to 317 (TVLF…VMWL), 363 to 383 (VLLF…ISAT), 400 to 420 (ALLS…WPII), 431 to 451 (IIVC…LGFL), 465 to 485 (WYEI…LSSY), 489 to 509 (FYGL…FAIT), and 534 to 554 (AFGF…MVDV). Residues 575 to 598 (HEDFESFEGSSDGHEAEGLMRDHD) form a disordered region. Residues 585–598 (SDGHEAEGLMRDHD) show a composition bias toward basic and acidic residues.

The protein belongs to the ATG22 family.

The protein localises to the vacuole membrane. Its function is as follows. Vacuolar effluxer which mediate the efflux of amino acids resulting from autophagic degradation. The release of autophagic amino acids allows the maintenance of protein synthesis and viability during nitrogen starvation. In Sclerotinia sclerotiorum (strain ATCC 18683 / 1980 / Ss-1) (White mold), this protein is Autophagy-related protein 22-1 (atg22-1).